A 100-amino-acid polypeptide reads, in one-letter code: Double-stranded DNA-binding protein (100 aa).

The DNA-binding element occupies 1-19 (MRKMMQREVTYTTAQLARM).

In terms of assembly, homodimer. Homomultimer. Binds to double-stranded DNA giving rise to multimeric nucleoprotein complexes.

In terms of biological role, histone-like nucleoprotein that binds to the viral dsDNA and responsible for wrapping and condensing the viral DNA about 4-fold. Forms a nucleoprotein complex in which the DNA adopts a right-handed toroidal conformation winding around a protein core. Binding specificity for the viral genome is based on supercoiling. The formation of the nucleoprotein complex at the genome ends, for which the binding affinity is highest, activates the initiation of viral DNA replication. The binding of p6 would recruit the complex formed by the TP and the DNA polymerase to the origin. Protein p6 is also involved in the early to late transcription switch. The chain is Double-stranded DNA-binding protein from Bacillus phage Nf (Bacteriophage Nf).